The sequence spans 68 residues: DNA-directed RNA polymerase subunit omega (68 aa).

Belongs to the RNA polymerase subunit omega family. In terms of assembly, the RNAP catalytic core consists of 2 alpha, 1 beta, 1 beta' and 1 omega subunit. When a sigma factor is associated with the core the holoenzyme is formed, which can initiate transcription.

The enzyme catalyses RNA(n) + a ribonucleoside 5'-triphosphate = RNA(n+1) + diphosphate. Promotes RNA polymerase assembly. Latches the N- and C-terminal regions of the beta' subunit thereby facilitating its interaction with the beta and alpha subunits. In Dechloromonas aromatica (strain RCB), this protein is DNA-directed RNA polymerase subunit omega.